The chain runs to 285 residues: 4-diphosphocytidyl-2-C-methyl-D-erythritol kinase (285 aa).

Residue lysine 11 is part of the active site. Position 93–103 (93–103 (PLAAGLAGGSA)) interacts with ATP. The active site involves aspartate 135.

The protein belongs to the GHMP kinase family. IspE subfamily.

It carries out the reaction 4-CDP-2-C-methyl-D-erythritol + ATP = 4-CDP-2-C-methyl-D-erythritol 2-phosphate + ADP + H(+). It functions in the pathway isoprenoid biosynthesis; isopentenyl diphosphate biosynthesis via DXP pathway; isopentenyl diphosphate from 1-deoxy-D-xylulose 5-phosphate: step 3/6. Its function is as follows. Catalyzes the phosphorylation of the position 2 hydroxy group of 4-diphosphocytidyl-2C-methyl-D-erythritol. This Moorella thermoacetica (strain ATCC 39073 / JCM 9320) protein is 4-diphosphocytidyl-2-C-methyl-D-erythritol kinase.